A 457-amino-acid polypeptide reads, in one-letter code: UDP-N-acetylmuramate--L-alanine ligase (457 aa).

109–115 (GTDGKTT) contributes to the ATP binding site.

Belongs to the MurCDEF family.

The protein localises to the cytoplasm. The enzyme catalyses UDP-N-acetyl-alpha-D-muramate + L-alanine + ATP = UDP-N-acetyl-alpha-D-muramoyl-L-alanine + ADP + phosphate + H(+). The protein operates within cell wall biogenesis; peptidoglycan biosynthesis. Its function is as follows. Cell wall formation. This chain is UDP-N-acetylmuramate--L-alanine ligase, found in Thermotoga sp. (strain RQ2).